Here is a 244-residue protein sequence, read N- to C-terminus: MSRRSRSRSRSPKRDREERKRREDRDRDRERKRDRKDRERKRRHRSSSSEGSQAEPHQLGSIFREERRRRERNESPKLPPPPPPPPSDPPVDTSIPFDVSTLNEPTKKWLEEKIVEQVSARVHQLEAMMAEKATSARNEMEKMLRAQIEAEMAVELAECKKRDEESRKKCKQLEAELERKVLEAEESRKKFEEDRLAMLEQKSQLERDRAELARQKSDMKKNEQQAILNKSGNSRAPIKFKFGK.

A compositionally biased stretch (basic residues) spans 1 to 11 (MSRRSRSRSRS). Disordered regions lie at residues 1–104 (MSRR…TLNE) and 213–244 (ARQK…KFGK). Positions 12-31 (PKRDREERKRREDRDRDRER) are enriched in basic and acidic residues. The segment covering 32 to 46 (KRDRKDRERKRRHRS) has biased composition (basic residues). Over residues 63–75 (FREERRRRERNES) the composition is skewed to basic and acidic residues. The span at 77 to 89 (KLPPPPPPPPSDP) shows a compositional bias: pro residues. Over residues 213-223 (ARQKSDMKKNE) the composition is skewed to basic and acidic residues. The segment covering 224-234 (QQAILNKSGNS) has biased composition (polar residues).

This is an uncharacterized protein from Caenorhabditis elegans.